The following is a 237-amino-acid chain: Ribonuclease PH (237 aa).

Residues R86 and 124–126 (GTR) each bind phosphate.

This sequence belongs to the RNase PH family. As to quaternary structure, homohexameric ring arranged as a trimer of dimers.

The catalysed reaction is tRNA(n+1) + phosphate = tRNA(n) + a ribonucleoside 5'-diphosphate. Phosphorolytic 3'-5' exoribonuclease that plays an important role in tRNA 3'-end maturation. Removes nucleotide residues following the 3'-CCA terminus of tRNAs; can also add nucleotides to the ends of RNA molecules by using nucleoside diphosphates as substrates, but this may not be physiologically important. Probably plays a role in initiation of 16S rRNA degradation (leading to ribosome degradation) during starvation. This Nitrobacter winogradskyi (strain ATCC 25391 / DSM 10237 / CIP 104748 / NCIMB 11846 / Nb-255) protein is Ribonuclease PH.